A 2604-amino-acid chain; its full sequence is BEACH domain-containing protein B (2604 aa).

Positions 1761–1912 (VGTSEVLTSV…NAKEVGMLIV (152 aa)) constitute a BEACH-type PH domain. One can recognise a BEACH domain in the interval 1936–2226 (DRRIAMEMAE…QIFRKKHPRR (291 aa)). WD repeat units follow at residues 2254-2293 (HSPS…SGGN), 2368-2407 (HHKD…TPEK), 2433-2474 (GHDD…RSLK), 2476-2515 (PSGS…LASS), 2516-2557 (ESNG…KRYN), and 2558-2596 (GAGK…HRKP).

May be involved in the suppression of BCHC1 activity. This chain is BEACH domain-containing protein B, found in Arabidopsis thaliana (Mouse-ear cress).